A 531-amino-acid chain; its full sequence is T-complex protein 1 subunit zeta (531 aa).

Ala2 carries the post-translational modification N-acetylalanine. At Lys5 the chain carries N6-acetyllysine. Gly39 contacts ADP. Gly39 is a binding site for ATP. A Mg(2+)-binding site is contributed by Asp90. Residues Gly91, Thr92, Thr93, Ser94, Thr158, and Lys159 each coordinate ADP. ATP is bound by residues Gly91, Thr92, and Thr93. An N6-acetyllysine modification is found at Lys199. A Phosphoserine modification is found at Ser205. A Glycyl lysine isopeptide (Lys-Gly) (interchain with G-Cter in SUMO2) cross-link involves residue Lys251. N6-acetyllysine is present on residues Lys287, Lys365, Lys377, and Lys388. Position 411 (Ala411) interacts with ADP. ATP contacts are provided by Ala411, Gly412, Asp496, and Lys501. ADP is bound at residue Asp496.

The protein belongs to the TCP-1 chaperonin family. As to quaternary structure, component of the chaperonin-containing T-complex (TRiC), a hexadecamer composed of two identical back-to-back stacked rings enclosing a protein folding chamber. Each ring is made up of eight different subunits: TCP1/CCT1, CCT2, CCT3, CCT4, CCT5, CCT6A/CCT6, CCT7, CCT8. Interacts with PACRG.

Its subcellular location is the cytoplasm. It carries out the reaction ATP + H2O = ADP + phosphate + H(+). In terms of biological role, component of the chaperonin-containing T-complex (TRiC), a molecular chaperone complex that assists the folding of actin, tubulin and other proteins upon ATP hydrolysis. The TRiC complex mediates the folding of WRAP53/TCAB1, thereby regulating telomere maintenance. The polypeptide is T-complex protein 1 subunit zeta (CCT6A) (Bos taurus (Bovine)).